A 96-amino-acid chain; its full sequence is Co-chaperonin GroES (96 aa).

The protein belongs to the GroES chaperonin family. As to quaternary structure, heptamer of 7 subunits arranged in a ring. Interacts with the chaperonin GroEL.

It localises to the cytoplasm. Its function is as follows. Together with the chaperonin GroEL, plays an essential role in assisting protein folding. The GroEL-GroES system forms a nano-cage that allows encapsulation of the non-native substrate proteins and provides a physical environment optimized to promote and accelerate protein folding. GroES binds to the apical surface of the GroEL ring, thereby capping the opening of the GroEL channel. The polypeptide is Co-chaperonin GroES (Methylibium petroleiphilum (strain ATCC BAA-1232 / LMG 22953 / PM1)).